A 196-amino-acid chain; its full sequence is UPF0301 protein BT_1078 (196 aa).

The protein belongs to the UPF0301 (AlgH) family.

In Bacteroides thetaiotaomicron (strain ATCC 29148 / DSM 2079 / JCM 5827 / CCUG 10774 / NCTC 10582 / VPI-5482 / E50), this protein is UPF0301 protein BT_1078.